A 408-amino-acid polypeptide reads, in one-letter code: Probable pectate lyase 5 (408 aa).

Positions 1–27 (MRMTLVHLSLSLFSCLLLVLSPTFIAS) are cleaved as a signal peptide. Asparagine 45 carries N-linked (GlcNAc...) asparagine glycosylation. Ca(2+)-binding residues include aspartate 206, aspartate 230, and aspartate 234. Arginine 286 is a catalytic residue.

It belongs to the polysaccharide lyase 1 family. Requires Ca(2+) as cofactor.

The catalysed reaction is Eliminative cleavage of (1-&gt;4)-alpha-D-galacturonan to give oligosaccharides with 4-deoxy-alpha-D-galact-4-enuronosyl groups at their non-reducing ends.. It participates in glycan metabolism; pectin degradation; 2-dehydro-3-deoxy-D-gluconate from pectin: step 2/5. The sequence is that of Probable pectate lyase 5 from Arabidopsis thaliana (Mouse-ear cress).